A 279-amino-acid chain; its full sequence is Large ribosomal subunit protein uL2 (279 aa).

Disordered stretches follow at residues 29–53 and 224–279; these read PEKSLLRPLSKSGGRNNQGRITTRH and VAMN…KKRK. Residues 253 to 268 show a composition bias toward basic and acidic residues; sequence KEGRTRHPNKESDKLI. Positions 269-279 are enriched in basic residues; the sequence is VRRRNAGKKRK.

The protein belongs to the universal ribosomal protein uL2 family. As to quaternary structure, part of the 50S ribosomal subunit. Forms a bridge to the 30S subunit in the 70S ribosome.

One of the primary rRNA binding proteins. Required for association of the 30S and 50S subunits to form the 70S ribosome, for tRNA binding and peptide bond formation. It has been suggested to have peptidyltransferase activity; this is somewhat controversial. Makes several contacts with the 16S rRNA in the 70S ribosome. The polypeptide is Large ribosomal subunit protein uL2 (Leifsonia xyli subsp. xyli (strain CTCB07)).